The primary structure comprises 70 residues: MIFKVFYQEKLTEVPVRENTKVLYLEATSQKDVRKKLNKFAYNIEFVQSVTGAHLEYEKQNADLILAEIV.

The protein belongs to the RNA polymerase subunit epsilon family. In terms of assembly, RNAP is composed of a core of 2 alpha, a beta and a beta' subunit. The core is associated with a delta subunit, and at least one of epsilon or omega. When a sigma factor is associated with the core the holoenzyme is formed, which can initiate transcription.

It carries out the reaction RNA(n) + a ribonucleoside 5'-triphosphate = RNA(n+1) + diphosphate. In terms of biological role, a non-essential component of RNA polymerase (RNAP). The sequence is that of DNA-directed RNA polymerase subunit epsilon from Bacillus mycoides (strain KBAB4) (Bacillus weihenstephanensis).